The sequence spans 555 residues: Chaperonin GroEL 2 (555 aa).

Residues 29 to 32, 86 to 90, glycine 414, 480 to 482, and aspartate 496 each bind ATP; these read TLGP, DGTTT, and NAL.

This sequence belongs to the chaperonin (HSP60) family. In terms of assembly, forms a cylinder of 14 subunits composed of two heptameric rings stacked back-to-back. Interacts with the co-chaperonin GroES.

It localises to the cytoplasm. It carries out the reaction ATP + H2O + a folded polypeptide = ADP + phosphate + an unfolded polypeptide.. Together with its co-chaperonin GroES, plays an essential role in assisting protein folding. The GroEL-GroES system forms a nano-cage that allows encapsulation of the non-native substrate proteins and provides a physical environment optimized to promote and accelerate protein folding. This is Chaperonin GroEL 2 from Synechococcus sp. (strain ATCC 27144 / PCC 6301 / SAUG 1402/1) (Anacystis nidulans).